The following is a 427-amino-acid chain: Extracellular superoxide dismutase [Cu-Zn] 2 (427 aa).

Residues 1-20 form the signal peptide; it reads MNKLIISLLIVLSAISIISA. Residues 21 to 406 lie on the Extracellular side of the membrane; sequence DYQYGYCKFG…PTETSQPGTS (386 aa). Residues N38, N57, N81, N190, and N218 are each glycosylated (N-linked (GlcNAc...) asparagine). Cu cation-binding residues include H257, H259, and H275. The Zn(2+) site is built by H275 and H283. An N-linked (GlcNAc...) asparagine glycan is attached at N288. Zn(2+) is bound by residues H292 and D295. Residue H331 coordinates Cu cation. Residue N376 is glycosylated (N-linked (GlcNAc...) asparagine). Residues 381–404 are disordered; sequence GESTIEPSPTPSTTPTPTETSQPG. The span at 395–404 shows a compositional bias: low complexity; that stretch reads PTPTETSQPG. A helical membrane pass occupies residues 407 to 426; that stretch reads SYLAPFFVLILSSLISVILI. Residue L427 is a topological domain, cytoplasmic.

The protein belongs to the Cu-Zn superoxide dismutase family. It depends on Cu cation as a cofactor. The cofactor is Zn(2+).

The protein resides in the cell membrane. It carries out the reaction 2 superoxide + 2 H(+) = H2O2 + O2. Functionally, protect the extracellular space from toxic effect of reactive oxygen intermediates by converting superoxyde radicals into hydrogen peroxyde and oxygen. The chain is Extracellular superoxide dismutase [Cu-Zn] 2 (sodB) from Dictyostelium discoideum (Social amoeba).